The sequence spans 413 residues: Phosphatidylcholine-sterol acyltransferase (413 aa).

The N-terminal stretch at 1–22 (GRTGAGFTLLTLLLLLPQPTSQ) is a signal peptide. A disulfide bond links Cys72 and Cys96. A glycan (N-linked (GlcNAc...) asparagine) is linked at Asn106. Catalysis depends on Ser203, which acts as the Charge relay system. The active-site Nucleophile is Ser203. An N-linked (GlcNAc...) asparagine glycan is attached at Asn294. A disulfide bridge connects residues Cys335 and Cys378. Active-site charge relay system residues include Asp367 and His399. An N-linked (GlcNAc...) asparagine glycan is attached at Asn406.

This sequence belongs to the AB hydrolase superfamily. Lipase family. In terms of tissue distribution, detected in blood plasma (at protein level). Expressed in liver, brain and adrenal glands. Lower expression in testes. In laying hens, expressed higher in brain than in liver. In roosters, higher levels in liver than in brain.

Its subcellular location is the secreted. The catalysed reaction is a sterol + a 1,2-diacyl-sn-glycero-3-phosphocholine = a sterol ester + a 1-acyl-sn-glycero-3-phosphocholine. APOA1 is the most potent activator in plasma. Also activated by APOE, APOC1 and APOA4. Functionally, central enzyme in the extracellular metabolism of plasma lipoproteins. Synthesized mainly in the liver and secreted into plasma where it converts cholesterol and phosphatidylcholines (lecithins) to cholesteryl esters and lysophosphatidylcholines on the surface of high and low density lipoproteins (HDLs and LDLs). The cholesterol ester is then transported back to the liver. Also produced in the brain by primary astrocytes, and esterifies free cholesterol on nascent APOE-containing lipoproteins secreted from glia and influences cerebral spinal fluid (CSF) APOE- and APOA1 levels. Together with APOE and the cholesterol transporter ABCA1, plays a key role in the maturation of glial-derived, nascent lipoproteins. Required for remodeling high-density lipoprotein particles into their spherical forms. Has a preference for plasma 16:0-18:2 or 18:O-18:2 phosphatidylcholines. The chain is Phosphatidylcholine-sterol acyltransferase (LCAT) from Gallus gallus (Chicken).